Consider the following 424-residue polypeptide: Imidazolonepropionase (424 aa).

Fe(3+) is bound by residues histidine 84 and histidine 86. 2 residues coordinate Zn(2+): histidine 84 and histidine 86. The 4-imidazolone-5-propanoate site is built by arginine 93, tyrosine 156, and histidine 189. Tyrosine 156 serves as a coordination point for N-formimidoyl-L-glutamate. Residue histidine 254 participates in Fe(3+) binding. Histidine 254 is a Zn(2+) binding site. Position 257 (glutamate 257) interacts with 4-imidazolone-5-propanoate. A Fe(3+)-binding site is contributed by aspartate 328. Position 328 (aspartate 328) interacts with Zn(2+). N-formimidoyl-L-glutamate-binding residues include asparagine 330 and glycine 332. Residue serine 333 participates in 4-imidazolone-5-propanoate binding.

This sequence belongs to the metallo-dependent hydrolases superfamily. HutI family. Zn(2+) is required as a cofactor. Fe(3+) serves as cofactor.

Its subcellular location is the cytoplasm. The enzyme catalyses 4-imidazolone-5-propanoate + H2O = N-formimidoyl-L-glutamate. It participates in amino-acid degradation; L-histidine degradation into L-glutamate; N-formimidoyl-L-glutamate from L-histidine: step 3/3. Its function is as follows. Catalyzes the hydrolytic cleavage of the carbon-nitrogen bond in imidazolone-5-propanoate to yield N-formimidoyl-L-glutamate. It is the third step in the universal histidine degradation pathway. In Geobacillus thermodenitrificans (strain NG80-2), this protein is Imidazolonepropionase.